Reading from the N-terminus, the 477-residue chain is Acylamidase (477 aa).

Residues K82 and S157 each act as charge relay system in the active site. Residue S181 is the Acyl-ester intermediate of the active site.

This sequence belongs to the amidase family.

It catalyses the reaction a monocarboxylic acid amide + H2O = a monocarboxylate + NH4(+). The catalysed reaction is an anilide + H2O = aniline + a carboxylate + H(+). It carries out the reaction an N-acyl-L-amino acid + H2O = an L-alpha-amino acid + a carboxylate. The enzyme catalyses an N-acetyl-L-cysteine-S-conjugate + H2O = an S-substituted L-cysteine + acetate. With respect to regulation, amidase activity is completely suppressed by inhibitors of serine proteases (phenylmethylsulfonyl fluoride and diisopropyl fluorophosphate), partially inhibited by copper and mercury ions, but is not affected by inhibitors of aliphatic amidases (acetaldehyde and nitrophenyl disulfides) or by EDTA. In terms of biological role, amidase with broad substrate specificity, catalyzing the hydrolysis of a wide range of N-substituted amides, and, to a lesser extent, the hydrolysis of non-substituted amides. Acid para-nitroanilides (4'-nitroacetanilide, Gly-pNA, Ala-pNA, Leu-pNA) are the best substrates for this enzyme. N-substituted acrylamides (isopropyl acrylamide, N,N-dimethyl-aminopropyl acrylamide, and methylene-bis-acrylamide), N-acetyl derivatives of glycine, alanine and leucine, and aliphatic amides (acetamide, acrylamide, isobutyramide, n-butyramide, and valeramide) can also be used as substrates but with less efficiency. The protein is Acylamidase of Rhodococcus erythropolis (Arthrobacter picolinophilus).